The chain runs to 158 residues: Naphthalene 1,2-dioxygenase system, small oxygenase component (158 aa).

Belongs to the bacterial ring-hydroxylating dioxygenase beta subunit family. As to quaternary structure, the naphthalene dioxygenase (NDO) multicomponent enzyme system is composed of an electron transfer component and a dioxygenase component (iron sulfur protein (ISP)). The electron transfer component is composed of a ferredoxin reductase (NdoR) and a ferredoxin (NdoA), and the dioxygenase component is formed of a heterohexamer (trimer of heterodimers) of three large alpha subunits (NdoB) and three small beta subunits (NdoC).

It functions in the pathway aromatic compound metabolism; naphthalene degradation. Its function is as follows. Component of the naphthalene dioxygenase (NDO) multicomponent enzyme system which catalyzes the incorporation of both atoms of molecular oxygen into naphthalene to form cis-(1R,2S)-dihydroxy-1,2-dihydronaphthalene. The beta subunit seems to have a structural role in the holoenzyme. This Pseudomonas fluorescens protein is Naphthalene 1,2-dioxygenase system, small oxygenase component.